We begin with the raw amino-acid sequence, 185 residues long: Large ribosomal subunit protein uL5 (185 aa).

It belongs to the universal ribosomal protein uL5 family. As to quaternary structure, part of the 50S ribosomal subunit; part of the 5S rRNA/L5/L18/L25 subcomplex. Contacts the 5S rRNA and the P site tRNA. Forms a bridge to the 30S subunit in the 70S ribosome.

In terms of biological role, this is one of the proteins that bind and probably mediate the attachment of the 5S RNA into the large ribosomal subunit, where it forms part of the central protuberance. In the 70S ribosome it contacts protein S13 of the 30S subunit (bridge B1b), connecting the 2 subunits; this bridge is implicated in subunit movement. Contacts the P site tRNA; the 5S rRNA and some of its associated proteins might help stabilize positioning of ribosome-bound tRNAs. The chain is Large ribosomal subunit protein uL5 from Bartonella henselae (strain ATCC 49882 / DSM 28221 / CCUG 30454 / Houston 1) (Rochalimaea henselae).